Consider the following 463-residue polypeptide: L-seryl-tRNA(Sec) selenium transferase (463 aa).

At lysine 295 the chain carries N6-(pyridoxal phosphate)lysine.

Belongs to the SelA family. As to quaternary structure, homodecamer; pentamer of dimers. Binds only one seryl-tRNA(Sec) per dimer. The cofactor is pyridoxal 5'-phosphate.

The protein localises to the cytoplasm. The catalysed reaction is L-seryl-tRNA(Sec) + selenophosphate + H(+) = L-selenocysteinyl-tRNA(Sec) + phosphate. The protein operates within aminoacyl-tRNA biosynthesis; selenocysteinyl-tRNA(Sec) biosynthesis; selenocysteinyl-tRNA(Sec) from L-seryl-tRNA(Sec) (bacterial route): step 1/1. Its function is as follows. Converts seryl-tRNA(Sec) to selenocysteinyl-tRNA(Sec) required for selenoprotein biosynthesis. In Escherichia coli O6:H1 (strain CFT073 / ATCC 700928 / UPEC), this protein is L-seryl-tRNA(Sec) selenium transferase.